Here is a 281-residue protein sequence, read N- to C-terminus: Sulfur carrier protein FdhD (281 aa).

The active-site Cysteine persulfide intermediate is the C117.

The protein belongs to the FdhD family.

The protein resides in the cytoplasm. In terms of biological role, required for formate dehydrogenase (FDH) activity. Acts as a sulfur carrier protein that transfers sulfur from IscS to the molybdenum cofactor prior to its insertion into FDH. This Xanthomonas euvesicatoria pv. vesicatoria (strain 85-10) (Xanthomonas campestris pv. vesicatoria) protein is Sulfur carrier protein FdhD.